A 248-amino-acid polypeptide reads, in one-letter code: Ubiquinone biosynthesis O-methyltransferase (248 aa).

The S-adenosyl-L-methionine site is built by R41, G72, D93, and M136.

Belongs to the methyltransferase superfamily. UbiG/COQ3 family.

It catalyses the reaction a 3-demethylubiquinol + S-adenosyl-L-methionine = a ubiquinol + S-adenosyl-L-homocysteine + H(+). The enzyme catalyses a 3-(all-trans-polyprenyl)benzene-1,2-diol + S-adenosyl-L-methionine = a 2-methoxy-6-(all-trans-polyprenyl)phenol + S-adenosyl-L-homocysteine + H(+). Its pathway is cofactor biosynthesis; ubiquinone biosynthesis. Its function is as follows. O-methyltransferase that catalyzes the 2 O-methylation steps in the ubiquinone biosynthetic pathway. This chain is Ubiquinone biosynthesis O-methyltransferase, found in Sinorhizobium fredii (strain NBRC 101917 / NGR234).